The chain runs to 156 residues: Endoribonuclease YbeY (156 aa).

3 residues coordinate Zn(2+): His122, His126, and His132.

The protein belongs to the endoribonuclease YbeY family. Requires Zn(2+) as cofactor.

Its subcellular location is the cytoplasm. Single strand-specific metallo-endoribonuclease involved in late-stage 70S ribosome quality control and in maturation of the 3' terminus of the 16S rRNA. The chain is Endoribonuclease YbeY from Geobacillus kaustophilus (strain HTA426).